The sequence spans 108 residues: Small ribosomal subunit protein uS17 (108 aa).

It belongs to the universal ribosomal protein uS17 family. In terms of assembly, part of the 30S ribosomal subunit.

One of the primary rRNA binding proteins, it binds specifically to the 5'-end of 16S ribosomal RNA. The chain is Small ribosomal subunit protein uS17 from Methanocorpusculum labreanum (strain ATCC 43576 / DSM 4855 / Z).